The sequence spans 97 residues: Bacterial microcompartment shell protein EutM (97 aa).

One can recognise a BMC domain in the interval 3-87; sequence ALGMIETRGL…PHGDLEEVFP (85 aa).

This sequence belongs to the bacterial microcompartments protein family. In terms of assembly, homohexamer with a central pore of up to 8.6 Angstroms diameter. The hexamers pack into a two-dimensional array. Interacts with EutQ.

The protein localises to the bacterial microcompartment. Its pathway is amine and polyamine degradation; ethanolamine degradation. Its function is as follows. Probably a major component of the bacterial microcompartment (BMC) shell dedicated to ethanolamine degradation. Each homohexamer has a central pore with an opening of up to 8.6 Angstroms. A positively-charged funnel leads to the pore from each side of the hexamer. The pore probably allows metabolite passage into and out of the BMC. In Escherichia coli O6:H1 (strain CFT073 / ATCC 700928 / UPEC), this protein is Bacterial microcompartment shell protein EutM (eutM).